Consider the following 262-residue polypeptide: Tritrans,polycis-undecaprenyl-diphosphate synthase (GGDP specific) (262 aa).

Aspartate 40 is a catalytic residue. Aspartate 40 lines the Mg(2+) pocket. Substrate contacts are provided by residues 41–44 (GNRR), tryptophan 45, and 85–87 (SAE). The Proton acceptor role is filled by asparagine 88. Residues arginine 92, arginine 211, and 217-219 (RIS) each bind substrate. Glutamate 230 is a binding site for Mg(2+).

It belongs to the UPP synthase family. In terms of assembly, homodimer. The cofactor is Mg(2+).

It catalyses the reaction geranylgeranyl diphosphate + 7 isopentenyl diphosphate = tri-trans,hepta-cis-undecaprenyl diphosphate + 7 diphosphate. Functionally, generates tritrans,heptacis-undecaprenyl diphosphate from isopentenyl pyrophosphate (IPP) and geranylgeranyl diphosphate. It is probably the precursor of glycosyl carrier lipids. The chain is Tritrans,polycis-undecaprenyl-diphosphate synthase (GGDP specific) (uppS) from Sulfolobus acidocaldarius (strain ATCC 33909 / DSM 639 / JCM 8929 / NBRC 15157 / NCIMB 11770).